Reading from the N-terminus, the 369-residue chain is Transforming protein Maf (369 aa).

2 disordered regions span residues 57–85 (STPMSTPCSSVPPSPSFSAPSPGSGTDQK) and 169–243 (GGAP…GLHF). Basic residues predominate over residues 173 to 183 (HYHHHHHHPHH). Over residues 184 to 193 (GGGGGGGGHP) the composition is skewed to gly residues. Low complexity predominate over residues 194 to 211 (HGAAPGSAPPSSASSSAA). Positions 212 to 226 (GSGGGGGGGGGGAGG) are enriched in gly residues. The interval 274–299 (RLKQKRRTLKNRGYAQSCRFKRVQQR) is basic motif. The region spanning 274–337 (RLKQKRRTLK…DAYKEKYEKL (64 aa)) is the bZIP domain. The leucine-zipper stretch occupies residues 302 to 323 (LESEKNQLLQQVEHLKQEISRL). The interval 341–369 (GFRENGSSSDNPSSPEFFMYPRESSTTVM) is disordered. The span at 345–354 (NGSSSDNPSS) shows a compositional bias: polar residues.

This sequence belongs to the bZIP family. Maf subfamily.

Its subcellular location is the host nucleus. Might be a transcriptional trans-activator. The sequence is that of Transforming protein Maf (V-MAF) from Galliformes.